A 142-amino-acid chain; its full sequence is MNSKSAQKIIDSIKQILTIYNIDFDPSFGSSLSSDSDADYEYLITKTQEKIQELDKRAQEILTQTGMSKEQMEVFANNPDNFSPEEWLALEKVRSSCDEYRKETENLINEITLDLHPTKESKRPKQKLSSTKKNKKKNWIPL.

Positions 115 to 142 (LHPTKESKRPKQKLSSTKKNKKKNWIPL) are disordered. Over residues 124–142 (PKQKLSSTKKNKKKNWIPL) the composition is skewed to basic residues.

It belongs to the chlamydial CPn_0742/CT_635/TC_0003 family.

The polypeptide is Protein CPn_0742/CP_0003/CPj0742/CpB0770 (Chlamydia pneumoniae (Chlamydophila pneumoniae)).